The sequence spans 283 residues: N-terminal Xaa-Pro-Lys N-methyltransferase 2 (283 aa).

S-adenosyl-L-methionine-binding positions include G124, R129, D146, 174–175, and Q190; that span reads LQ.

The protein belongs to the methyltransferase superfamily. NTM1 family.

It localises to the nucleus. The enzyme catalyses N-terminal L-alanyl-L-prolyl-L-lysyl-[protein] + S-adenosyl-L-methionine = N-terminal N-methyl-L-alanyl-L-prolyl-L-lysyl-[protein] + S-adenosyl-L-homocysteine + H(+). It catalyses the reaction N-terminal L-prolyl-L-prolyl-L-lysyl-[protein] + S-adenosyl-L-methionine = N-terminal N-methyl-L-prolyl-L-prolyl-L-lysyl-[protein] + S-adenosyl-L-homocysteine + H(+). The catalysed reaction is N-terminal L-seryl-L-prolyl-L-lysyl-[protein] + S-adenosyl-L-methionine = N-terminal N-methyl-L-seryl-L-prolyl-L-lysyl-[protein] + S-adenosyl-L-homocysteine + H(+). In terms of biological role, alpha N-methyltransferase that methylates the N-terminus of target proteins containing the N-terminal motif [Ala/Pro/Ser]-Pro-Lys when the initiator Met is cleaved. Specifically catalyzes monomethylation of exposed alpha-amino group of Ala or Ser residue in the [Ala/Ser]-Pro-Lys motif and Pro in the Pro-Pro-Lys motif. Predominantly functions as a mono-methyltransferase but is also able to di-/tri-methylate the GPKRIA peptide and di-methylate the PPKRIA peptide (in vitro). May activate NTMT1 by priming its substrates for trimethylation. This chain is N-terminal Xaa-Pro-Lys N-methyltransferase 2 (Ntmt2), found in Mus musculus (Mouse).